The chain runs to 212 residues: MMVIFLGPPGAGKGTQGKKIAKKIDLPHIAIGDIFRTIIKTSTSEAELINNYVKQGELIPNEIVNQVIKNFLLSSEYKNGYILDGYPRNLEQAKFFESFIKEKIKIIYFDVSDELLIKRILGRYSCKNCGKIYNRYFVQPKTDNVCDVCGSSTFDYRKDDNEEVIKKRIEVYKTETYPLIDYYKNSGNFYIVNGSKNEQEIEIDIQKILKIN.

10-15 (GAGKGT) lines the ATP pocket. Positions 30-59 (AIGDIFRTIIKTSTSEAELINNYVKQGELI) are NMP. AMP-binding positions include R36, 57-59 (ELI), 85-88 (GYPR), and Q92. The tract at residues 122 to 160 (GRYSCKNCGKIYNRYFVQPKTDNVCDVCGSSTFDYRKDD) is LID. R123 contributes to the ATP binding site. C126 and C129 together coordinate Zn(2+). 132–133 (IY) contacts ATP. Residues C146 and C149 each coordinate Zn(2+). R157 and R168 together coordinate AMP. K196 is an ATP binding site.

Belongs to the adenylate kinase family. As to quaternary structure, monomer.

It localises to the cytoplasm. The catalysed reaction is AMP + ATP = 2 ADP. The protein operates within purine metabolism; AMP biosynthesis via salvage pathway; AMP from ADP: step 1/1. Its function is as follows. Catalyzes the reversible transfer of the terminal phosphate group between ATP and AMP. Plays an important role in cellular energy homeostasis and in adenine nucleotide metabolism. This chain is Adenylate kinase, found in Rickettsia conorii (strain ATCC VR-613 / Malish 7).